A 694-amino-acid polypeptide reads, in one-letter code: Elongation factor G (694 aa).

The 280-residue stretch at 8–287 (EDYRNFGIMA…AVVEFLPAPT (280 aa)) folds into the tr-type G domain. Residues 17 to 24 (AHIDAGKT), 86 to 90 (DTPGH), and 140 to 143 (NKMD) each bind GTP.

It belongs to the TRAFAC class translation factor GTPase superfamily. Classic translation factor GTPase family. EF-G/EF-2 subfamily.

The protein localises to the cytoplasm. In terms of biological role, catalyzes the GTP-dependent ribosomal translocation step during translation elongation. During this step, the ribosome changes from the pre-translocational (PRE) to the post-translocational (POST) state as the newly formed A-site-bound peptidyl-tRNA and P-site-bound deacylated tRNA move to the P and E sites, respectively. Catalyzes the coordinated movement of the two tRNA molecules, the mRNA and conformational changes in the ribosome. In Brucella anthropi (strain ATCC 49188 / DSM 6882 / CCUG 24695 / JCM 21032 / LMG 3331 / NBRC 15819 / NCTC 12168 / Alc 37) (Ochrobactrum anthropi), this protein is Elongation factor G.